A 313-amino-acid polypeptide reads, in one-letter code: Acetaldehyde dehydrogenase 2 (313 aa).

NAD(+) is bound at residue 12 to 15 (SGNI). Catalysis depends on Cys-132, which acts as the Acyl-thioester intermediate. Residues 163 to 171 (SAGPGTRAN) and Asn-287 contribute to the NAD(+) site.

Belongs to the acetaldehyde dehydrogenase family.

The enzyme catalyses acetaldehyde + NAD(+) + CoA = acetyl-CoA + NADH + H(+). This Paraburkholderia xenovorans (strain LB400) protein is Acetaldehyde dehydrogenase 2 (amnH).